A 367-amino-acid chain; its full sequence is Phospho-N-acetylmuramoyl-pentapeptide-transferase (367 aa).

10 helical membrane-spanning segments follow: residues 13–33 (ISGI…ALTL), 49–69 (LPLL…VPLL), 95–115 (MGGI…SNFA), 119–139 (LAVS…DWQI), 154–174 (LALQ…NQPA), 183–203 (WVSF…FVLV), 215–235 (IDGL…AIVA), 237–257 (TSPA…GFLA), 281–301 (AVAL…IFFV), and 347–367 (VSSF…IAPF).

The protein belongs to the glycosyltransferase 4 family. MraY subfamily. The cofactor is Mg(2+).

The protein resides in the cell inner membrane. It catalyses the reaction UDP-N-acetyl-alpha-D-muramoyl-L-alanyl-gamma-D-glutamyl-meso-2,6-diaminopimeloyl-D-alanyl-D-alanine + di-trans,octa-cis-undecaprenyl phosphate = di-trans,octa-cis-undecaprenyl diphospho-N-acetyl-alpha-D-muramoyl-L-alanyl-D-glutamyl-meso-2,6-diaminopimeloyl-D-alanyl-D-alanine + UMP. Its pathway is cell wall biogenesis; peptidoglycan biosynthesis. Its function is as follows. Catalyzes the initial step of the lipid cycle reactions in the biosynthesis of the cell wall peptidoglycan: transfers peptidoglycan precursor phospho-MurNAc-pentapeptide from UDP-MurNAc-pentapeptide onto the lipid carrier undecaprenyl phosphate, yielding undecaprenyl-pyrophosphoryl-MurNAc-pentapeptide, known as lipid I. This is Phospho-N-acetylmuramoyl-pentapeptide-transferase from Trichormus variabilis (strain ATCC 29413 / PCC 7937) (Anabaena variabilis).